The chain runs to 662 residues: Probable protein phosphatase CG10417 (662 aa).

One can recognise a PPM-type phosphatase domain in the interval 23 to 564; the sequence is AVGASSMQGW…DNMTAVIVQF (542 aa). 2 residues coordinate Mn(2+): Asp57 and Gly58. 2 disordered regions span residues 219 to 275 and 288 to 374; these read DGVA…FKHT and GSND…DEDQ. 3 stretches are compositionally biased toward polar residues: residues 238–252, 261–275, and 288–319; these read DSNT…STKN, NDQN…FKHT, and GSND…INSS. Phosphoserine is present on residues Ser289 and Ser306. Over residues 320 to 334 the composition is skewed to acidic residues; that stretch reads QDDEFTDDDADYEEN. Over residues 337–347 the composition is skewed to polar residues; it reads VKSPDTSSAES. A compositionally biased stretch (acidic residues) spans 349 to 374; it reads DCTENDDDGDEDGNEDSDEEETDEDQ. Mn(2+)-binding residues include Asp506 and Asp555. Residues 591-609 are compositionally biased toward polar residues; sequence VSHSLNDQSASKRCASQNA. Positions 591–662 are disordered; the sequence is VSHSLNDQSA…KEVTIIVSSS (72 aa). Ser592, Ser594, and Ser599 each carry phosphoserine. Basic and acidic residues predominate over residues 616-637; sequence LEKNNSKRLKTDLEQENIKDRT. Phosphothreonine is present on Thr637. Phosphoserine is present on residues Ser639 and Ser641.

The protein belongs to the PP2C family. It depends on Mg(2+) as a cofactor. The cofactor is Mn(2+).

It carries out the reaction O-phospho-L-seryl-[protein] + H2O = L-seryl-[protein] + phosphate. The catalysed reaction is O-phospho-L-threonyl-[protein] + H2O = L-threonyl-[protein] + phosphate. This chain is Probable protein phosphatase CG10417, found in Drosophila melanogaster (Fruit fly).